Here is a 482-residue protein sequence, read N- to C-terminus: Methylenetetrahydrofolate--tRNA-(uracil-5-)-methyltransferase TrmFO (482 aa).

11 to 16 (GGGLAG) provides a ligand contact to FAD. Positions 450–482 (LRQPSPWSAEDSPRAALPIPEPTPLGPASGSSE) are disordered.

The protein belongs to the MnmG family. TrmFO subfamily. The cofactor is FAD.

It is found in the cytoplasm. It carries out the reaction uridine(54) in tRNA + (6R)-5,10-methylene-5,6,7,8-tetrahydrofolate + NADH + H(+) = 5-methyluridine(54) in tRNA + (6S)-5,6,7,8-tetrahydrofolate + NAD(+). The catalysed reaction is uridine(54) in tRNA + (6R)-5,10-methylene-5,6,7,8-tetrahydrofolate + NADPH + H(+) = 5-methyluridine(54) in tRNA + (6S)-5,6,7,8-tetrahydrofolate + NADP(+). Functionally, catalyzes the folate-dependent formation of 5-methyl-uridine at position 54 (M-5-U54) in all tRNAs. In Rhodospirillum rubrum (strain ATCC 11170 / ATH 1.1.1 / DSM 467 / LMG 4362 / NCIMB 8255 / S1), this protein is Methylenetetrahydrofolate--tRNA-(uracil-5-)-methyltransferase TrmFO.